Consider the following 332-residue polypeptide: 2,3-diketo-L-gulonate reductase (332 aa).

H44 (proton donor) is an active-site residue. Residues 168–174, 224–225, and 304–306 contribute to the NAD(+) site; these read ITMVDMS, WK, and GHE.

This sequence belongs to the LDH2/MDH2 oxidoreductase family. DlgD subfamily. As to quaternary structure, homodimer.

The protein resides in the cytoplasm. The enzyme catalyses 3-dehydro-L-gulonate + NAD(+) = 2,3-dioxo-L-gulonate + NADH + H(+). The catalysed reaction is 3-dehydro-L-gulonate + NADP(+) = 2,3-dioxo-L-gulonate + NADPH + H(+). Functionally, catalyzes the reduction of 2,3-diketo-L-gulonate in the presence of NADH, to form 3-keto-L-gulonate. This Haemophilus influenzae (strain ATCC 51907 / DSM 11121 / KW20 / Rd) protein is 2,3-diketo-L-gulonate reductase.